The chain runs to 156 residues: Phospholipase A2 A2-hormotoxin-Apt1a (156 aa).

Residues 1–19 (MQLYTYFFTFSLVLILALA) form the signal peptide. The propeptide occupies 20 to 35 (DQENKSLDFTQEGGIA). Intrachain disulfides connect C62–C156, C64–C80, C79–C138, C86–C131, and C115–C129. Ca(2+)-binding residues include G65 and G67. H83 is an active-site residue. D84 is a binding site for Ca(2+). D132 is an active-site residue.

Belongs to the phospholipase A2 family. The cofactor is Ca(2+).

It localises to the secreted. The protein resides in the nematocyst. It catalyses the reaction a 1,2-diacyl-sn-glycero-3-phosphocholine + H2O = a 1-acyl-sn-glycero-3-phosphocholine + a fatty acid + H(+). Functionally, sea anemone phospholipase A2 (PLA2) that may have a role both in defense and in digestion, since its expression and enzymatic activity were found both in the acontia (defensive organs) and tentacles. PLA2 catalyzes the calcium-dependent hydrolysis of the 2-acyl groups in 3-sn-phosphoglycerides. The sequence is that of Phospholipase A2 A2-hormotoxin-Apt1a from Adamsia palliata (Cloak anemone).